A 584-amino-acid chain; its full sequence is Insulin-like growth factor 2 mRNA-binding protein 3 (584 aa).

2 RRM domains span residues 2 to 75 (NKLY…HSVP) and 81 to 156 (RKLQ…YIPD). Residues 160-199 (AQQPPQQHPQGRRGFGQRGPPRQGSPSATTRQKPQSDVPL) are disordered. Over residues 184–194 (SPSATTRQKPQ) the composition is skewed to polar residues. KH domains follow at residues 196 to 261 (DVPL…CKII), 277 to 344 (EIPL…EEEI), 409 to 474 (SETV…QGRI), and 491 to 557 (KLEA…QRKI).

It belongs to the RRM IMP/VICKZ family. Homodimer and multimer.

The protein resides in the cytoplasm. It localises to the nucleus. It is found in the P-body. The protein localises to the stress granule. Functionally, RNA-binding factor that may recruit target transcripts to cytoplasmic protein-RNA complexes (mRNPs). This transcript 'caging' into mRNPs allows mRNA transport and transient storage. It also modulates the rate and location at which target transcripts encounter the translational apparatus and shields them from endonuclease attacks or microRNA-mediated degradation. Preferentially binds to N6-methyladenosine (m6A)-containing mRNAs and increases their stability. This Gallus gallus (Chicken) protein is Insulin-like growth factor 2 mRNA-binding protein 3 (IGF2BP3).